Consider the following 255-residue polypeptide: 5-oxoprolinase subunit A (255 aa).

Belongs to the LamB/PxpA family. In terms of assembly, forms a complex composed of PxpA, PxpB and PxpC.

It catalyses the reaction 5-oxo-L-proline + ATP + 2 H2O = L-glutamate + ADP + phosphate + H(+). Functionally, catalyzes the cleavage of 5-oxoproline to form L-glutamate coupled to the hydrolysis of ATP to ADP and inorganic phosphate. The protein is 5-oxoprolinase subunit A of Pyrococcus horikoshii (strain ATCC 700860 / DSM 12428 / JCM 9974 / NBRC 100139 / OT-3).